The following is a 164-amino-acid chain: ATP synthase subunit b 1 (164 aa).

The chain crosses the membrane as a helical span at residues 8–28; it reads PETWVAIAFVILMGLFAYLGV.

It belongs to the ATPase B chain family. F-type ATPases have 2 components, F(1) - the catalytic core - and F(0) - the membrane proton channel. F(1) has five subunits: alpha(3), beta(3), gamma(1), delta(1), epsilon(1). F(0) has three main subunits: a(1), b(2) and c(10-14). The alpha and beta chains form an alternating ring which encloses part of the gamma chain. F(1) is attached to F(0) by a central stalk formed by the gamma and epsilon chains, while a peripheral stalk is formed by the delta and b chains.

It is found in the cell inner membrane. Functionally, f(1)F(0) ATP synthase produces ATP from ADP in the presence of a proton or sodium gradient. F-type ATPases consist of two structural domains, F(1) containing the extramembraneous catalytic core and F(0) containing the membrane proton channel, linked together by a central stalk and a peripheral stalk. During catalysis, ATP synthesis in the catalytic domain of F(1) is coupled via a rotary mechanism of the central stalk subunits to proton translocation. Its function is as follows. Component of the F(0) channel, it forms part of the peripheral stalk, linking F(1) to F(0). This is ATP synthase subunit b 1 from Bradyrhizobium sp. (strain ORS 278).